The following is a 177-amino-acid chain: Cytidylate kinase (177 aa).

Gly7–Thr15 contacts ATP.

This sequence belongs to the cytidylate kinase family. Type 2 subfamily.

The protein localises to the cytoplasm. It catalyses the reaction CMP + ATP = CDP + ADP. It carries out the reaction dCMP + ATP = dCDP + ADP. The protein is Cytidylate kinase of Methanocorpusculum labreanum (strain ATCC 43576 / DSM 4855 / Z).